Consider the following 160-residue polypeptide: MGRDLGWCFFVATVLLAAVLLPAPTIAGRLELKNEISGVASVRKAKLAVRCWSNEDDLGWNMLKPKQSRIWKFTTMNMWPFQKTEFRCQFRSGFGTTNEDVVTVFSVKDGFRKQCGVGGDECFWVAKRDGFYLRRIVKDGGGDSRKKYVDVLKSKWVWKW.

Positions 1–27 (MGRDLGWCFFVATVLLAAVLLPAPTIA) are cleaved as a signal peptide.

It belongs to the plant self-incompatibility (S1) protein family.

The protein resides in the secreted. This chain is S-protein homolog 13, found in Arabidopsis thaliana (Mouse-ear cress).